The following is a 230-amino-acid chain: MVQKKPINRSLRGRFITFEGGEGAGKSTQIRLLAKRLEKARLRTLVTREPGGSPGAEAIRSALLAGIGKLIGGADAEALLFAAARDDHVRTLIEPALARGEWVLCDRFYDSTRAYQGKLGAVSLDLLNALQQVTIGDMKPDLTVILDIPVEIGLARAAVRRGSETPDRFESEAIDFHRGLREVFRQIAAQEPERCVLIDANAEPEEVADRIWQAVRLRLLEPARAGAKSA.

20 to 27 (GGEGAGKS) serves as a coordination point for ATP.

The protein belongs to the thymidylate kinase family.

The enzyme catalyses dTMP + ATP = dTDP + ADP. Phosphorylation of dTMP to form dTDP in both de novo and salvage pathways of dTTP synthesis. This chain is Thymidylate kinase, found in Rhodopseudomonas palustris (strain ATCC BAA-98 / CGA009).